The sequence spans 328 residues: Tetraacyldisaccharide 4'-kinase (328 aa).

Position 55 to 62 (55 to 62) interacts with ATP; sequence TAGGNGKT.

It belongs to the LpxK family.

It catalyses the reaction a lipid A disaccharide + ATP = a lipid IVA + ADP + H(+). It participates in glycolipid biosynthesis; lipid IV(A) biosynthesis; lipid IV(A) from (3R)-3-hydroxytetradecanoyl-[acyl-carrier-protein] and UDP-N-acetyl-alpha-D-glucosamine: step 6/6. Functionally, transfers the gamma-phosphate of ATP to the 4'-position of a tetraacyldisaccharide 1-phosphate intermediate (termed DS-1-P) to form tetraacyldisaccharide 1,4'-bis-phosphate (lipid IVA). This chain is Tetraacyldisaccharide 4'-kinase, found in Shigella dysenteriae serotype 1 (strain Sd197).